Reading from the N-terminus, the 137-residue chain is Small ribosomal subunit protein uS11 (137 aa).

Disordered regions lie at residues 1-31 (MPPK…AAHI) and 117-137 (TISD…RRRV). The segment covering 12 to 21 (KTQKARRRDK) has biased composition (basic residues).

The protein belongs to the universal ribosomal protein uS11 family. As to quaternary structure, part of the 30S ribosomal subunit. Interacts with proteins S7 and S18. Binds to IF-3.

In terms of biological role, located on the platform of the 30S subunit, it bridges several disparate RNA helices of the 16S rRNA. Forms part of the Shine-Dalgarno cleft in the 70S ribosome. The sequence is that of Small ribosomal subunit protein uS11 from Rhodococcus jostii (strain RHA1).